The following is a 113-amino-acid chain: U11-theraphotoxin-Hhn1a (113 aa).

The first 21 residues, 1–21 (MNTVRVTFLLVFVLAVSLGQA), serve as a signal peptide directing secretion. Positions 22–74 (DKDENRMEMQEKTEQGKGYLDFAENLLPQKLEELEAKLLEEDSEESRNSRQKR) are excised as a propeptide. Residues 59–69 (LLEEDSEESRN) are compositionally biased toward basic and acidic residues. The segment at 59-83 (LLEEDSEESRNSRQKRCIGEGVPCD) is disordered. Intrachain disulfides connect C75–C90, C82–C95, and C89–C110.

This sequence belongs to the neurotoxin 14 (magi-1) family. 01 (HNTX-16) subfamily. In terms of tissue distribution, expressed by the venom gland.

Its subcellular location is the secreted. Functionally, probable ion channel inhibitor. This Cyriopagopus hainanus (Chinese bird spider) protein is U11-theraphotoxin-Hhn1a.